We begin with the raw amino-acid sequence, 507 residues long: MEASWLENRWARPLHLALVFCLALVLMQAVKLYLRRQRLLRDLRPFPGPTAHWLLGHQKFLQEDNMEKLDEIVKEYPCAFPCWVGPFQAFFYIYDPDYAKIFLSRTDPKTQYLHQLMTPFLGRGLLNLDGPRWFQHRCLLTPAFHQDILKPCVDMMAHSVNMMLDKWEKTWTTQETTIEVFEHINLMTLDIIMKCAFGQETNCQINGTYESYVKATFELGEIISSRLYNFWHHHDIIFKLSPKGHCFQELGKVIHQCTEKIIQDRKKTLKDQVNQDDTQTSQNFLDIVLSAQAGDEKAFSDADLRSEVNTFMWAGHDASAASISWLLYCLALNPEHQDRCRTEIRSILGDGSSITWEQLDEIPYTTMCIKETLRLIPPIPSISRELSKPLTLPDGHSLPAGMTVVLSIWGLHHNPAVWKDPKVFDPLRFTKENSEQRHPCAFLPFSSGPRNCIGQQFAMLELKVAIALTLLRFRVAADLTRPPAFSSHTVLRPKHGIYLHLKKLPEC.

Residues 14–34 (LHLALVFCLALVLMQAVKLYL) traverse the membrane as a helical segment. C452 is a binding site for heme.

This sequence belongs to the cytochrome P450 family. Heme serves as cofactor. Expressed at high levels in brain, mainly in neurons in different regions, including brain stem, hippocampus, cortex and cerebellum. Also expressed in cerebral vasculature. Not detected in kidney, nor liver.

It is found in the endoplasmic reticulum membrane. The protein resides in the microsome membrane. It carries out the reaction N-(5Z,8Z,11Z,14Z-eicosatetraenoyl)-ethanolamine + reduced [NADPH--hemoprotein reductase] + O2 = N-(14,15-epoxy-5Z,8Z,11Z-eicosatrienoyl)-ethanolamine + oxidized [NADPH--hemoprotein reductase] + H2O + H(+). A cytochrome P450 monooxygenase that selectively catalyzes the epoxidation of the last double bond of the arachidonoyl moiety of anandamide, potentially modulating endocannabinoid signaling. Has no hydroxylase activity toward various fatty acids, steroids and prostaglandins. Mechanistically, uses molecular oxygen inserting one oxygen atom into a substrate, and reducing the second into a water molecule, with two electrons provided by NADPH via cytochrome P450 reductase (CPR; NADPH-ferrihemoprotein reductase). This Rattus norvegicus (Rat) protein is Cytochrome P450 4X1.